The following is a 708-amino-acid chain: Glycogen [starch] synthase isoform 1 (708 aa).

Residue arginine 20 coordinates UDP. At serine 159 the chain carries Phosphoserine. Histidine 193 and arginine 199 together coordinate UDP-alpha-D-glucose. Alpha-D-glucose 6-phosphate contacts are provided by histidine 280, glutamate 281, glutamine 283, histidine 286, and lysine 290. Residue arginine 320 coordinates UDP. Arginine 320 is a UDP-alpha-D-glucose binding site. Serine 363 is modified (phosphoserine). An alpha-D-glucose 6-phosphate-binding site is contributed by histidine 500. Residues glutamate 509, tryptophan 511, and glycine 512 each contribute to the UDP-alpha-D-glucose site. Threonine 514 is a UDP binding site. Position 560 is a phosphoserine (serine 560). Arginine 583 and arginine 587 together coordinate alpha-D-glucose 6-phosphate. Phosphoserine occurs at positions 651 and 655. 2 positions are modified to phosphoserine; by PKA: serine 660 and serine 662. The interval 687 to 708 (STNGAIDNDDDDNDTSAYYEDN) is disordered. Positions 693 to 708 (DNDDDDNDTSAYYEDN) are enriched in acidic residues.

The protein belongs to the glycosyltransferase 3 family.

It carries out the reaction [(1-&gt;4)-alpha-D-glucosyl](n) + UDP-alpha-D-glucose = [(1-&gt;4)-alpha-D-glucosyl](n+1) + UDP + H(+). The protein operates within glycan biosynthesis; glycogen biosynthesis. Its activity is regulated as follows. Allosteric activation by glucose-6-phosphate, and phosphorylation by a cAMP-dependent kinase. In terms of biological role, glycogen synthase participates in the glycogen biosynthetic process along with glycogenin and glycogen branching enzyme. Extends the primer composed of a few glucose units formed by glycogenin by adding new glucose units to it. In this context, glycogen synthase transfers the glycosyl residue from UDP-Glc to the non-reducing end of alpha-1,4-glucan. This chain is Glycogen [starch] synthase isoform 1 (GSY1), found in Saccharomyces cerevisiae (strain ATCC 204508 / S288c) (Baker's yeast).